Reading from the N-terminus, the 874-residue chain is Alanine--tRNA ligase (874 aa).

Zn(2+)-binding residues include His563, His567, Cys665, and His669.

This sequence belongs to the class-II aminoacyl-tRNA synthetase family. It depends on Zn(2+) as a cofactor.

It localises to the cytoplasm. The catalysed reaction is tRNA(Ala) + L-alanine + ATP = L-alanyl-tRNA(Ala) + AMP + diphosphate. In terms of biological role, catalyzes the attachment of alanine to tRNA(Ala) in a two-step reaction: alanine is first activated by ATP to form Ala-AMP and then transferred to the acceptor end of tRNA(Ala). Also edits incorrectly charged Ser-tRNA(Ala) and Gly-tRNA(Ala) via its editing domain. This Haemophilus influenzae (strain PittGG) protein is Alanine--tRNA ligase.